Consider the following 589-residue polypeptide: Cell fusion protein aff-1 (589 aa).

Positions Met1–Ala20 are cleaved as a signal peptide. The Extracellular segment spans residues Arg21–Trp537. 7 N-linked (GlcNAc...) asparagine glycosylation sites follow: Asn58, Asn138, Asn205, Asn335, Asn382, Asn392, and Asn408. The chain crosses the membrane as a helical span at residues Leu538–Phe558. At Thr559–Tyr589 the chain is on the cytoplasmic side.

It belongs to the EFF/AFF cell fusogen family. As to expression, expressed in amphid sheath cells.

It localises to the cell membrane. The protein resides in the apical cell membrane. Functionally, required for cell fusion events during development including the fusion of anchor cells (AC), vulval A and vulval D rings, and late epidermal seam cells. Required for amphid sheath cell fusion induced by entry into dauer stage. The protein is Cell fusion protein aff-1 of Caenorhabditis elegans.